Consider the following 453-residue polypeptide: Autophagy-related protein 18 (453 aa).

WD repeat units lie at residues 9-49 (KSSN…YTNN), 204-244 (AHKT…KLHQ), and 249-288 (SYAARIYSLNFNAVSTLLAVSSDTETVHIFKLSSGAGAGA). The L/FRRG motif signature appears at 245 to 249 (FRRGS). Positions 284-324 (AGAGAKGRSSSNGGESPSLNSFDGSSDSSSPPGSTTNATRG) are disordered. A compositionally biased stretch (low complexity) spans 289-320 (KGRSSSNGGESPSLNSFDGSSDSSSPPGSTTN).

The protein belongs to the WD repeat PROPPIN family. In terms of assembly, component of the PI(3,5)P2 regulatory complex.

The protein localises to the preautophagosomal structure membrane. Its subcellular location is the vacuole membrane. It is found in the endosome membrane. The PI(3,5)P2 regulatory complex regulates both the synthesis and turnover of phosphatidylinositol 3,5-bisphosphate (PtdIns(3,5)P2). Necessary for proper vacuole morphology. Plays an important role in osmotically-induced vacuole fragmentation. Required for cytoplasm to vacuole transport (Cvt) vesicle formation, pexophagy and starvation-induced autophagy. Involved in correct ATG9 trafficking to the pre-autophagosomal structure. Might also be involved in premeiotic DNA replication. The polypeptide is Autophagy-related protein 18 (ATG18) (Mycosarcoma maydis (Corn smut fungus)).